A 153-amino-acid chain; its full sequence is SsrA-binding protein (153 aa).

Positions 133–143 are enriched in basic and acidic residues; that stretch reads ADLKERDDKRQ. The interval 133–153 is disordered; sequence ADLKERDDKRQMQQALKQQQY. The span at 144-153 shows a compositional bias: low complexity; the sequence is MQQALKQQQY.

Belongs to the SmpB family.

The protein localises to the cytoplasm. In terms of biological role, required for rescue of stalled ribosomes mediated by trans-translation. Binds to transfer-messenger RNA (tmRNA), required for stable association of tmRNA with ribosomes. tmRNA and SmpB together mimic tRNA shape, replacing the anticodon stem-loop with SmpB. tmRNA is encoded by the ssrA gene; the 2 termini fold to resemble tRNA(Ala) and it encodes a 'tag peptide', a short internal open reading frame. During trans-translation Ala-aminoacylated tmRNA acts like a tRNA, entering the A-site of stalled ribosomes, displacing the stalled mRNA. The ribosome then switches to translate the ORF on the tmRNA; the nascent peptide is terminated with the 'tag peptide' encoded by the tmRNA and targeted for degradation. The ribosome is freed to recommence translation, which seems to be the essential function of trans-translation. The chain is SsrA-binding protein from Protochlamydia amoebophila (strain UWE25).